Reading from the N-terminus, the 884-residue chain is MGSTGEPDRKRRLSSSVAPGGGAPVSPAKRLAVAPTSEDKKLDFTVLKYKNQKLSEQLEAHKFEYRALENKFAGLKEKQRTHNETLSLVNSSWEQLVADLKSRSFCKSGSPNSSPGSGHNNVQKDGTCAPIERDTLRSLVESGATESSGCLPGCHLGSDAPPLHLSTANALGDIFFPSSDLLQANEECALAALTKLPENDRSKQLQSTSSNLLSSLNNVVQALSNLQLKHKQLAEDYQNQRDSSARKRAEHRRLKEELASAASELEETNYKLAALKAQRDNTQGARIPYPTLGNKSMPEDKVRDKQREMQDLEATHKELSELISKRLVEIKRLHEERIEILNKIATFQNILMDFKSIRSSKAFQLVNDRLQKSQAELDHYQTLLEKLQVDKDKFVWQERQFNLKVDLAEIPERVSTYCESSIADLKKDIQKLRDEKNMLILKLEEASREPGRNQVITKFKALVSSIPREMGAMQSEMTKHKEASLELNSLRAEVHSLSRILSRKERDNEEASCRSARAGSDITQLQSVISDLKQTNKELKLFADMYKRESTDSREIMESRDREFLEWAHVHALKSSLDESKLEQRVKAANEAEAITQQRLATAEAEIAESGQKLGTSRKDLVSLSHMLKSKQEECEAYRVEVECIGQAYEDIQAQNQQLLQQIIERDDDNTKIFMEGVKAKQTQDALHLETYSLRRNLQQESSLMDLYNQKIVSLEDQLKMWSDRVGKLQEDGWQQSVSLSNYQRKLVDVHRDAQKLMQSLDGIQANVGSSRLEVADLLIELEKERFSKKRIEDDLEVMSRKASSLRAKARESAVLEKLRHEVKEYRGILKCGICHDRQKEVVITKCYHLFCNQCIQKSLGNRQRRCPSCSLSFGANDVKPIYI.

The disordered stretch occupies residues 1 to 37 (MGSTGEPDRKRRLSSSVAPGGGAPVSPAKRLAVAPTS). Residues 49–86 (YKNQKLSEQLEAHKFEYRALENKFAGLKEKQRTHNETL) adopt a coiled-coil conformation. Positions 107–127 (KSGSPNSSPGSGHNNVQKDGT) are disordered. Residues 108 to 121 (SGSPNSSPGSGHNN) are compositionally biased toward low complexity. Coiled coils occupy residues 216-541 (LNNV…ELKL), 580-663 (SKLE…LQQI), 696-762 (RNLQ…QSLD), and 789-827 (KKRIEDDLEVMSRKASSLRAKARESAVLEKLRHEVKEYR). Residues 832–871 (CGICHDRQKEVVITKCYHLFCNQCIQKSLGNRQRRCPSCS) form an RING-type zinc finger.

Belongs to the BRE1 family.

It is found in the nucleus. The catalysed reaction is S-ubiquitinyl-[E2 ubiquitin-conjugating enzyme]-L-cysteine + [acceptor protein]-L-lysine = [E2 ubiquitin-conjugating enzyme]-L-cysteine + N(6)-ubiquitinyl-[acceptor protein]-L-lysine.. The protein operates within protein modification; protein ubiquitination. Functionally, E3 ubiquitin-protein ligase that monoubiquitinates H2B to form H2BK143ub1. H2BK143ub1 gives a specific tag for epigenetic transcriptional activation and is also prerequisite for H3K4me and maybe H3K79me. It thereby plays a central role in histone code and gene regulation. Forms a ubiquitin ligase complex in cooperation with the E2 enzyme UBC2/RAD6. The chain is E3 ubiquitin-protein ligase BRE1-like 1 (BRE1A) from Oryza sativa subsp. indica (Rice).